Reading from the N-terminus, the 133-residue chain is Ribosome-binding factor A (133 aa).

The protein belongs to the RbfA family. As to quaternary structure, monomer. Binds 30S ribosomal subunits, but not 50S ribosomal subunits or 70S ribosomes.

It localises to the cytoplasm. Its function is as follows. One of several proteins that assist in the late maturation steps of the functional core of the 30S ribosomal subunit. Associates with free 30S ribosomal subunits (but not with 30S subunits that are part of 70S ribosomes or polysomes). Required for efficient processing of 16S rRNA. May interact with the 5'-terminal helix region of 16S rRNA. The sequence is that of Ribosome-binding factor A from Salmonella schwarzengrund (strain CVM19633).